The sequence spans 602 residues: Elongation factor 4 (602 aa).

A tr-type G domain is found at 7–189; that stretch reads KYIRNFSIVA…AIVNKVPAPD (183 aa). Residues 19–24 and 136–139 contribute to the GTP site; these read DHGKST and NKID.

The protein belongs to the TRAFAC class translation factor GTPase superfamily. Classic translation factor GTPase family. LepA subfamily.

It is found in the cell membrane. It catalyses the reaction GTP + H2O = GDP + phosphate + H(+). In terms of biological role, required for accurate and efficient protein synthesis under certain stress conditions. May act as a fidelity factor of the translation reaction, by catalyzing a one-codon backward translocation of tRNAs on improperly translocated ribosomes. Back-translocation proceeds from a post-translocation (POST) complex to a pre-translocation (PRE) complex, thus giving elongation factor G a second chance to translocate the tRNAs correctly. Binds to ribosomes in a GTP-dependent manner. The protein is Elongation factor 4 of Clostridium botulinum (strain 657 / Type Ba4).